A 628-amino-acid polypeptide reads, in one-letter code: Glutamyl-tRNA(Gln) amidotransferase subunit E (628 aa).

It belongs to the GatB/GatE family. GatE subfamily. As to quaternary structure, heterodimer of GatD and GatE.

The enzyme catalyses L-glutamyl-tRNA(Gln) + L-glutamine + ATP + H2O = L-glutaminyl-tRNA(Gln) + L-glutamate + ADP + phosphate + H(+). In terms of biological role, allows the formation of correctly charged Gln-tRNA(Gln) through the transamidation of misacylated Glu-tRNA(Gln) in organisms which lack glutaminyl-tRNA synthetase. The reaction takes place in the presence of glutamine and ATP through an activated gamma-phospho-Glu-tRNA(Gln). The GatDE system is specific for glutamate and does not act on aspartate. The protein is Glutamyl-tRNA(Gln) amidotransferase subunit E of Sulfurisphaera tokodaii (strain DSM 16993 / JCM 10545 / NBRC 100140 / 7) (Sulfolobus tokodaii).